The following is a 218-amino-acid chain: uncharacterized protein (218 aa).

A run of 5 helical transmembrane segments spans residues 28–48 (ILLFALSILGIGDGLIVLSGL), 66–86 (FDIGWSSFLISCAVMLVWKPL), 92–112 (LGTLLNIIVIALFLGITTKIL), 122–142 (MIFCLIGILLYGFGTALYLTC), and 173–193 (ISVCLLGFLLGGVVGLGTVLF).

It localises to the cell membrane. This is an uncharacterized protein from Haemophilus influenzae (strain ATCC 51907 / DSM 11121 / KW20 / Rd).